The sequence spans 50 residues: MQDLKTYLSTAPVLAILCCSFLAGLVIEINRFFPDALTLTFPSFEFFSSP.

The helical transmembrane segment at 7–27 (YLSTAPVLAILCCSFLAGLVI) threads the bilayer.

This sequence belongs to the PsaJ family.

The protein localises to the plastid. It is found in the chloroplast thylakoid membrane. Its function is as follows. May help in the organization of the PsaE and PsaF subunits. The polypeptide is Photosystem I reaction center subunit IX (Pinus koraiensis (Korean pine)).